We begin with the raw amino-acid sequence, 288 residues long: Probable HTH-type transcriptional regulator STM3175 (288 aa).

Positions R14–S113 constitute an HTH araC/xylS-type domain. DNA-binding regions (H-T-H motif) lie at residues E31–S52 and V80–F103. The tract at residues R111–R288 is putative effector binding domain; binds the peptide antibiotic albicidin.

In terms of assembly, homodimer.

Functionally, probable transcription factor. In Salmonella typhimurium (strain LT2 / SGSC1412 / ATCC 700720), this protein is Probable HTH-type transcriptional regulator STM3175.